Reading from the N-terminus, the 66-residue chain is Alpha-conotoxin GID (66 aa).

Residues 1 to 21 (MGMRMMFTVFLLVVLAATIVS) form the signal peptide. Positions 22 to 44 (FTSDRASDGRNVAAKAFHRIGRT) are excised as a propeptide. The N-terminal tail important for activity on alpha-3-beta-2/CHRNA3-CHRNB2 and alpha-4-beta-2/CHRNA4-CHRNB2 nAChR stretch occupies residues 45-48 (IRDE). The residue at position 48 (Glu48) is a 4-carboxyglutamate. Intrachain disulfides connect Cys49/Cys55 and Cys50/Cys63. Positions 51–53 (SNP) are ser-Xaa-Pro motif, crucial for potent interaction with nAChR. At Pro60 the chain carries 4-hydroxyproline.

Belongs to the conotoxin A superfamily. In terms of processing, gamma-carboxyglutamation of Glu-48 seems to be not important for nAChR inhibition, since synthetic peptides without this modification do not show change in inhibition of alpha-7/CHRNA7 and alpha-3-beta-2/CHRNA3-CHRNB2 nAChR and show a 2.3-fold increase in inhibition of alpha-4-beta-2/CHRNA4-CHRNB2 nAChR. Hydroxylation of Pro-60 seems to be important for nAChR inhibition, since synthetic peptides without this modification show a small decrease in inhibition of alpha-7/CHRNA7 and alpha-3-beta-2/CHRNA3-CHRNB2 nAChR and a very important decrease in inhibition of alpha-4-beta-2/CHRNA4-CHRNB2 nAChR. Post-translationally, an amidation of Cys-63 increases potency against alpha-7/CHRNA7 (2.6-fold) and alpha-3-beta-2/CHRNA3-CHRNB2 (2-fold) nAChR. On the other hand, the peptide has no more activity on alpha-4-beta-2/CHRNA4-CHRNB2 nAChR with an amidated Cys-63. In terms of tissue distribution, expressed by the venom duct.

The protein resides in the secreted. Its function is as follows. Alpha-conotoxins act on postsynaptic membranes, they bind to the nicotinic acetylcholine receptors (nAChR) and thus inhibit them. This toxin reversibly blocks alpha-3-beta-2/CHRNA3-CHRNB2 (IC(50)=3.1-5.1 nM), alpha-7/CHRNA7 (IC(50)=4.5-5.1 nM), and alpha-4-beta-2/CHRNA4-CHRNB2 (IC(50)=128.6-390 nM) nAChRs. In Conus geographus (Geography cone), this protein is Alpha-conotoxin GID.